Here is a 98-residue protein sequence, read N- to C-terminus: Large ribosomal subunit protein eL21 (98 aa).

Positions 1-24 (MVKMSHGPRSGSRRKLTKSAEERK) are disordered.

This sequence belongs to the eukaryotic ribosomal protein eL21 family.

This chain is Large ribosomal subunit protein eL21 (rpl21e), found in Thermoplasma acidophilum (strain ATCC 25905 / DSM 1728 / JCM 9062 / NBRC 15155 / AMRC-C165).